The following is a 306-amino-acid chain: Methionyl-tRNA formyltransferase (306 aa).

A (6S)-5,6,7,8-tetrahydrofolate-binding site is contributed by 109 to 112 (SILP).

The protein belongs to the Fmt family.

It catalyses the reaction L-methionyl-tRNA(fMet) + (6R)-10-formyltetrahydrofolate = N-formyl-L-methionyl-tRNA(fMet) + (6S)-5,6,7,8-tetrahydrofolate + H(+). In terms of biological role, attaches a formyl group to the free amino group of methionyl-tRNA(fMet). The formyl group appears to play a dual role in the initiator identity of N-formylmethionyl-tRNA by promoting its recognition by IF2 and preventing the misappropriation of this tRNA by the elongation apparatus. This is Methionyl-tRNA formyltransferase from Sphingopyxis alaskensis (strain DSM 13593 / LMG 18877 / RB2256) (Sphingomonas alaskensis).